The primary structure comprises 652 residues: Potassium voltage-gated channel subfamily KQT member 1 (652 aa).

The Cytoplasmic segment spans residues 1–110 (MSSEQPAWTF…YNFLERPTGW (110 aa)). Residues 111–132 (KCFVYHFTVFLIVLICLIFSVL) form a helical membrane-spanning segment. Residues 133–143 (STIQQYNNLAT) lie on the Extracellular side of the membrane. The helical transmembrane segment at 144–166 (ETLFWMEIVLVVFFGAEYVVRLW) threads the bilayer. At 167 to 182 (SAGCRSKYVGVWGRLR) the chain is on the cytoplasmic side. The chain crosses the membrane as a helical span at residues 183 to 208 (FARKPISVIDLIVVVASVIVLCVGSN). The Extracellular portion of the chain corresponds to 209 to 216 (GQVFATSA). Residues 217–232 (IRGIRFLQILRMLHVD) form a helical; Voltage-sensor membrane-spanning segment. Residues 228–236 (MLHVDRQGG) form an interaction with KCNE3 region. At 233–250 (RQGGTWRLLGSVVFIHRQ) the chain is on the cytoplasmic side. Gln234 serves as a coordination point for a 1,2-diacyl-sn-glycero-3-phospho-(1D-myo-inositol-4,5-bisphosphate). A helical membrane pass occupies residues 251 to 273 (ELITTLYIGFLGLIFSSYFVYLA). The Extracellular segment spans residues 274–289 (EKDAIDSSGEYQFGSY). Positions 290 to 310 (ADALWWGVVTVTTIGYGDKVP) form an intramembrane region, pore-forming. Residues 311-312 (QT) lie on the Extracellular side of the membrane. Residues 313 to 338 (WIGKTIASCFSVFAISFFALPAGILG) form a helical membrane-spanning segment. Residues 339 to 652 (SGFALKVQQK…VPRMTQDNIS (314 aa)) lie on the Cytoplasmic side of the membrane. An interaction with CALM region spans residues 360–372 (AAASLIQTAWRCY). The interval 393 to 419 (HHLMSPSPKPKKSAMVKKKKIRTERDE) is disordered. Basic residues predominate over residues 401–414 (KPKKSAMVKKKKIR). An interaction with CALM; calcium-dependent region spans residues 504 to 518 (KVIRRMQYFVAKKKF). Residues 524–561 (PYDVRDVIEQYSQGHLNLMVRIKELQRRLDQSLGKPSL) form an interaction with KCNE1 C-terminus region. The interaction with AKAP9 stretch occupies residues 577-605 (IGSRLNRVEDKVTQMDHKLNLITDMLHHL). Positions 578-609 (GSRLNRVEDKVTQMDHKLNLITDMLHHLLTNQ) are C-terminal assembly domain (tetramerization). Residues 609 to 652 (QQGSQSIRTPHRSNSLNSENHPSRNTLPTYEQLNVPRMTQDNIS) are disordered.

Belongs to the potassium channel family. KQT (TC 1.A.1.15) subfamily. Kv7.1/KCNQ1 sub-subfamily. As to quaternary structure, tetramer. Heterotetramer with KCNE1; targets to the membrane raft. Interacts (via C-terminus) with CALM; forms a heterotetramer in a calcium-independent manner. Interacts with KCNE2; form a heterooligomer complex that targets to the membrane raft and leading to currents with an apparently instantaneous activation, a rapid deactivation process and a linear current-voltage relationship and decreases the amplitude of the outward current. Interacts with KCNE3; four KCNE3 molecules are bound to one KCNQ1 tetramer (4:4 KCNQ1:KCNE3 stoichiometry); alters membrane raft localization; affects KCNQ1 structure and gating properties. Interacts with KCNE4; impairs KCNQ1 localization in lipid rafts and inhibits voltage-gated potassium channel activity. Interacts with KCNE5; impairs KCNQ1 localization in lipid rafts and only conducts current upon strong and continued depolarization.

The protein localises to the cell membrane. The protein resides in the cytoplasmic vesicle membrane. Its subcellular location is the membrane raft. It localises to the endoplasmic reticulum. It is found in the basolateral cell membrane. It catalyses the reaction K(+)(in) = K(+)(out). With respect to regulation, PIP2 molecule is essential to activate KCNQ channels by inducing the coupling of the voltage-sensing domain (VSD) and the pore-forming domain (PD). Upon channel activation, PIP2 disrupts the VSD-calmodulin/CALM interactions, causing the release of CALM from the VSD which triggers the opening of the gate. Calcium potentiates KCNQ1 channel current through calcium-bound CALM. Calcium-bound CALM competes with PIP2 to stabilize the channel open state. Functionally, pore-forming subunit of the voltage-gated potassium (Kv) channel involved in the regulation of cardiomyocyte excitability and important in normal development and functions of myocardium, inner ear, stomach and colon. Associates with KCNE beta subunits that modulates current kinetics. Induces a voltage-dependent by rapidly activating and slowly deactivating potassium-selective outward current. Also promotes a delayed voltage activated potassium current showing outward rectification characteristic. During beta-adrenergic receptor stimulation participates in cardiac repolarization by associating with KCNE1 to form the I(Ks) cardiac potassium current that increases the amplitude and slows down the activation kinetics of outward potassium current I(Ks). When associated with KCNE3, forms the potassium channel that is important for cyclic AMP-stimulated intestinal secretion of chloride ions. When associated with KCNE2, forms a heterooligomer complex leading to currents with an apparently instantaneous activation, a rapid deactivation process and a linear current-voltage relationship and decreases the amplitude of the outward current. When associated with KCNE4, inhibits voltage-gated potassium channel activity. When associated with KCNE5, this complex only conducts current upon strong and continued depolarization. This Xenopus laevis (African clawed frog) protein is Potassium voltage-gated channel subfamily KQT member 1.